The primary structure comprises 111 residues: Viscotoxin-A3 (111 aa).

An N-terminal signal peptide occupies residues 1 to 26; sequence MEVVRGSSLVLLVLLLGALLVSQVES. Intrachain disulfides connect C29/C66, C30/C58, and C42/C52. Residues 73-111 constitute a propeptide, acidic domain; that stretch reads FYCTLGCESSQCATNSNGDAEAVRCKTACSDLCQDVDDA.

This sequence belongs to the plant thionin (TC 1.C.44) family.

The protein resides in the secreted. Functionally, thionins are small plant proteins which are toxic to animal cells. They seem to exert their toxic effect at the level of the cell membrane. Their precise function is not known. This chain is Viscotoxin-A3 (THI2.1), found in Viscum album (European mistletoe).